Reading from the N-terminus, the 405-residue chain is Replication factor C large subunit (405 aa).

47–54 (GPPGVGKT) contacts ATP.

The protein belongs to the activator 1 small subunits family. RfcL subfamily. Heteropentamer composed of four small subunits (RfcS) and one large subunit (RfcL). Probably interacts with PCNA subunit PCNA3.

Functionally, part of the RFC clamp loader complex which loads the PCNA sliding clamp onto DNA. The complex possesses DNA-dependent ATPase activity. This Saccharolobus solfataricus (strain ATCC 35092 / DSM 1617 / JCM 11322 / P2) (Sulfolobus solfataricus) protein is Replication factor C large subunit (rfcL).